Reading from the N-terminus, the 760-residue chain is Prolyl endopeptidase FAP (760 aa).

Topologically, residues 1-4 are cytoplasmic; the sequence is MKTW. The helical; Signal-anchor for type II membrane protein transmembrane segment at 5 to 25 threads the bilayer; the sequence is LKIVFGVATSAVLALLVMCIV. The Extracellular segment spans residues 26–760; the sequence is LRPSRVHNSE…FLKQCFSLSD (735 aa). Residues Asn49, Asn92, and Asn99 are each glycosylated (N-linked (GlcNAc...) asparagine). Glu203 and Glu204 together coordinate substrate. N-linked (GlcNAc...) asparagine glycosylation is found at Asn227 and Asn314. 3 disulfide bridges follow: Cys321–Cys332, Cys438–Cys441, and Cys448–Cys466. Residues 481–512 adopt a coiled-coil conformation; it reads TDQEIKILEDNKELENALKNIQLPKEEIKKLK. The active-site Charge relay system is Ser624. Cysteines 643 and 755 form a disulfide. Asn679 carries N-linked (GlcNAc...) asparagine glycosylation. Residues Asp702 and His734 each act as charge relay system in the active site.

Belongs to the peptidase S9B family. In terms of assembly, homodimer; homodimerization is required for activity of both plasma membrane and soluble forms. The monomer is inactive. Heterodimer with DPP4. Interacts with PLAUR; the interaction occurs at the cell surface of invadopodia membranes. Interacts with ITGB1. Interacts with ITGA3. Associates with integrin alpha-3/beta-1; the association occurs in a collagen-dependent manner at the cell surface of invadopodia membranes. In terms of processing, N-glycosylated. The N-terminus may be blocked.

The protein resides in the cell surface. The protein localises to the cell membrane. It is found in the cell projection. It localises to the lamellipodium membrane. Its subcellular location is the invadopodium membrane. The protein resides in the ruffle membrane. The protein localises to the membrane. It is found in the secreted. It catalyses the reaction Release of an N-terminal dipeptide, Xaa-Yaa-|-Zaa-, from a polypeptide, preferentially when Yaa is Pro, provided Zaa is neither Pro nor hydroxyproline.. It carries out the reaction Hydrolysis of Pro-|-Xaa &gt;&gt; Ala-|-Xaa in oligopeptides.. Gelatinase activity is inhibited by serine-protease inhibitors, such as phenylmethylsulfonyl fluoride (PMSF), 4-(2-aminoethyl)-benzenesulfonyl fluoride hydrochloride (AEBSF), 4-amidino phenylsulfonyl fluoride (APSF) and diisopropyl fluorophosphate (DFP), N-ethylmaleimide (NEM) and phenylmethylsulfonyl fluoride (PMSF). Dipeptidyl peptidase activity is inhibited by 2,2'-azino-bis(3-ethylbenzthiazoline-6-sulfonic acid), diisopropylfluorophosphate (DFP). Prolyl endopeptidase activity is inhibited by the boronic acid peptide Ac-Gly-BoroPro, Ac-Gly-Pro-chloromethyl ketone and Thr-Ser-Gly-chloromethyl ketone. Cell surface glycoprotein serine protease that participates in extracellular matrix degradation and involved in many cellular processes including tissue remodeling, fibrosis, wound healing, inflammation and tumor growth. Both plasma membrane and soluble forms exhibit post-proline cleaving endopeptidase activity, with a marked preference for Ala/Ser-Gly-Pro-Ser/Asn/Ala consensus sequences, on substrate such as alpha-2-antiplasmin SERPINF2 and SPRY2. Degrade also gelatin, heat-denatured type I collagen, but not native collagen type I and IV, vibronectin, tenascin, laminin, fibronectin, fibrin or casein. Also has dipeptidyl peptidase activity, exhibiting the ability to hydrolyze the prolyl bond two residues from the N-terminus of synthetic dipeptide substrates provided that the penultimate residue is proline, with a preference for Ala-Pro, Ile-Pro, Gly-Pro, Arg-Pro and Pro-Pro. Natural neuropeptide hormones for dipeptidyl peptidase are the neuropeptide Y (NPY), peptide YY (PYY), substance P (TAC1) and brain natriuretic peptide 32 (NPPB). The plasma membrane form, in association with either DPP4, PLAUR or integrins, is involved in the pericellular proteolysis of the extracellular matrix (ECM), and hence promotes cell adhesion, migration and invasion through the ECM. Plays a role in tissue remodeling during development and wound healing. Participates in the cell invasiveness towards the ECM in malignant melanoma cancers. Enhances tumor growth progression by increasing angiogenesis, collagen fiber degradation and apoptosis and by reducing antitumor response of the immune system. Promotes glioma cell invasion through the brain parenchyma by degrading the proteoglycan brevican. Acts as a tumor suppressor in melanocytic cells through regulation of cell proliferation and survival in a serine protease activity-independent manner. This is Prolyl endopeptidase FAP from Bos taurus (Bovine).